The chain runs to 137 residues: Gonadotropin subunit beta-1 (137 aa).

Positions 1 to 24 are cleaved as a signal peptide; the sequence is MYCTHLKTLQLVVMATLWVTPVRA. Intrachain disulfides connect Cys32–Cys78, Cys46–Cys93, Cys55–Cys108, Cys59–Cys110, and Cys113–Cys120. Asn36 carries an N-linked (GlcNAc...) asparagine glycan.

Belongs to the glycoprotein hormones subunit beta family. Heterodimer of an alpha and a beta chain.

It localises to the secreted. Its function is as follows. Involved in gametogenesis and steroidogenesis. The sequence is that of Gonadotropin subunit beta-1 (cgba) from Oncorhynchus masou (Cherry salmon).